A 191-amino-acid chain; its full sequence is Adenylate kinase (191 aa).

An ATP-binding site is contributed by 12-17 (GSGKTT). The NMP stretch occupies residues 34-63 (STGDLLRAESAKKTERGLLIEKFTSQGELV). AMP contacts are provided by residues T35, R40, 61–63 (ELV), 88–91 (GYPR), and Q95. The tract at residues 130-136 (GRSRGAD) is LID. Residue R131 participates in ATP binding. R133 and R145 together coordinate AMP. R173 contacts ATP.

This sequence belongs to the adenylate kinase family. Monomer.

Its subcellular location is the cytoplasm. The enzyme catalyses AMP + ATP = 2 ADP. The protein operates within purine metabolism; AMP biosynthesis via salvage pathway; AMP from ADP: step 1/1. Catalyzes the reversible transfer of the terminal phosphate group between ATP and AMP. Plays an important role in cellular energy homeostasis and in adenine nucleotide metabolism. This chain is Adenylate kinase, found in Helicobacter pylori (strain ATCC 700392 / 26695) (Campylobacter pylori).